The chain runs to 227 residues: uncharacterized protein (227 aa).

7 consecutive transmembrane segments (helical) span residues 25–45 (LLGF…NAGF), 49–69 (AAFG…YGMI), 80–100 (TGVT…GPVL), 111–131 (KIVG…SALA), 144–164 (FLTV…FLGI), 165–185 (PALA…MIMW), and 201–221 (AALT…NILL).

Its subcellular location is the cell membrane. This is an uncharacterized protein from Neisseria meningitidis serogroup B (strain ATCC BAA-335 / MC58).